Here is a 190-residue protein sequence, read N- to C-terminus: MRNILAPVLSLVLIAGVASPALAASGPFFSLKNTDFVVTIAFLVFIAVLFYFKVPSMIGGALDKRAEGIQSDLDEARKLREEAQSLLASFERKQKEMQGQADAIVAAAKEEAQRSAEQAKVDLEASIARRLAAAQDQIASAEAAAVKDVRDRAIAIAVAAAGDVIASSMTAAEANKLIDAGIADAGAKLH.

Residues I4 to A24 traverse the membrane as a helical segment.

It belongs to the ATPase B chain family. F-type ATPases have 2 components, F(1) - the catalytic core - and F(0) - the membrane proton channel. F(1) has five subunits: alpha(3), beta(3), gamma(1), delta(1), epsilon(1). F(0) has three main subunits: a(1), b(2) and c(10-14). The alpha and beta chains form an alternating ring which encloses part of the gamma chain. F(1) is attached to F(0) by a central stalk formed by the gamma and epsilon chains, while a peripheral stalk is formed by the delta and b chains.

It localises to the cell inner membrane. Functionally, f(1)F(0) ATP synthase produces ATP from ADP in the presence of a proton or sodium gradient. F-type ATPases consist of two structural domains, F(1) containing the extramembraneous catalytic core and F(0) containing the membrane proton channel, linked together by a central stalk and a peripheral stalk. During catalysis, ATP synthesis in the catalytic domain of F(1) is coupled via a rotary mechanism of the central stalk subunits to proton translocation. Component of the F(0) channel, it forms part of the peripheral stalk, linking F(1) to F(0). The protein is ATP synthase subunit b of Ruegeria pomeroyi (strain ATCC 700808 / DSM 15171 / DSS-3) (Silicibacter pomeroyi).